Consider the following 201-residue polypeptide: Small ribosomal subunit protein uS4c (201 aa).

The interval Leu-15–Gln-43 is disordered. The 62-residue stretch at Met-89–Asn-150 folds into the S4 RNA-binding domain.

Belongs to the universal ribosomal protein uS4 family. Part of the 30S ribosomal subunit. Contacts protein S5. The interaction surface between S4 and S5 is involved in control of translational fidelity.

Its subcellular location is the plastid. It localises to the chloroplast. One of the primary rRNA binding proteins, it binds directly to 16S rRNA where it nucleates assembly of the body of the 30S subunit. In terms of biological role, with S5 and S12 plays an important role in translational accuracy. The protein is Small ribosomal subunit protein uS4c (rps4) of Drimys granadensis.